We begin with the raw amino-acid sequence, 232 residues long: Ubiquinone biosynthesis O-methyltransferase (232 aa).

4 residues coordinate S-adenosyl-L-methionine: arginine 36, glycine 55, aspartate 76, and leucine 120.

This sequence belongs to the methyltransferase superfamily. UbiG/COQ3 family.

It catalyses the reaction a 3-demethylubiquinol + S-adenosyl-L-methionine = a ubiquinol + S-adenosyl-L-homocysteine + H(+). The enzyme catalyses a 3-(all-trans-polyprenyl)benzene-1,2-diol + S-adenosyl-L-methionine = a 2-methoxy-6-(all-trans-polyprenyl)phenol + S-adenosyl-L-homocysteine + H(+). The protein operates within cofactor biosynthesis; ubiquinone biosynthesis. Its function is as follows. O-methyltransferase that catalyzes the 2 O-methylation steps in the ubiquinone biosynthetic pathway. The sequence is that of Ubiquinone biosynthesis O-methyltransferase from Pseudomonas savastanoi pv. phaseolicola (strain 1448A / Race 6) (Pseudomonas syringae pv. phaseolicola (strain 1448A / Race 6)).